A 445-amino-acid chain; its full sequence is Putative aldehyde dehydrogenase AldX (445 aa).

Catalysis depends on residues glutamate 214 and cysteine 248.

The protein belongs to the aldehyde dehydrogenase family.

The enzyme catalyses an aldehyde + NAD(+) + H2O = a carboxylate + NADH + 2 H(+). The protein is Putative aldehyde dehydrogenase AldX (aldX) of Bacillus subtilis (strain 168).